The sequence spans 729 residues: Fatty acid oxidation complex subunit alpha (729 aa).

Residues 1–189 (MLYKGDTLYL…KIGLVDGVVK (189 aa)) form an enoyl-CoA hydratase/isomerase region. Residue Asp-296 coordinates substrate. Positions 311–729 (ETPKQAAVLG…ARPVGDLKTA (419 aa)) are 3-hydroxyacyl-CoA dehydrogenase. NAD(+) is bound by residues Met-324, Asp-343, 400–402 (VVE), Lys-407, and Ser-429. His-450 serves as the catalytic For 3-hydroxyacyl-CoA dehydrogenase activity. Asn-453 is a binding site for NAD(+). 2 residues coordinate substrate: Asn-500 and Tyr-660. Residues 708 to 729 (RHNEPYYPPVEPARPVGDLKTA) form a disordered region.

The protein in the N-terminal section; belongs to the enoyl-CoA hydratase/isomerase family. It in the C-terminal section; belongs to the 3-hydroxyacyl-CoA dehydrogenase family. Heterotetramer of two alpha chains (FadB) and two beta chains (FadA).

It carries out the reaction a (3S)-3-hydroxyacyl-CoA + NAD(+) = a 3-oxoacyl-CoA + NADH + H(+). The enzyme catalyses a (3S)-3-hydroxyacyl-CoA = a (2E)-enoyl-CoA + H2O. It catalyses the reaction a 4-saturated-(3S)-3-hydroxyacyl-CoA = a (3E)-enoyl-CoA + H2O. The catalysed reaction is (3S)-3-hydroxybutanoyl-CoA = (3R)-3-hydroxybutanoyl-CoA. It carries out the reaction a (3Z)-enoyl-CoA = a 4-saturated (2E)-enoyl-CoA. The enzyme catalyses a (3E)-enoyl-CoA = a 4-saturated (2E)-enoyl-CoA. Its pathway is lipid metabolism; fatty acid beta-oxidation. Functionally, involved in the aerobic and anaerobic degradation of long-chain fatty acids via beta-oxidation cycle. Catalyzes the formation of 3-oxoacyl-CoA from enoyl-CoA via L-3-hydroxyacyl-CoA. It can also use D-3-hydroxyacyl-CoA and cis-3-enoyl-CoA as substrate. This is Fatty acid oxidation complex subunit alpha from Escherichia coli (strain K12 / MC4100 / BW2952).